The following is a 996-amino-acid chain: Oxysterol-binding protein homolog 3 (996 aa).

The segment at 1–183 (METIDIQNRS…KKKILFNASV (183 aa)) is GOLD domain. Residues 75–114 (GSSSNIEEHHRRSSQHSHSSSNGSDNKRKERSYSSLSISG) form a disordered region. Residues S190 and S193 each carry the phosphoserine modification. T210 is subject to Phosphothreonine. Residues 221 to 315 (GRYLQGYLLK…WVDALQTCFD (95 aa)) form the PH domain. At T323 the chain carries Phosphothreonine. The residue at position 324 (S324) is a Phosphoserine. Residues T325 and T352 each carry the phosphothreonine modification. The segment at 338–372 (EVINKSSPQDHDHLTPTATTKSALSHRQHTQKDMD) is disordered. Residues 514–520 (EFFDAEE) carry the FFAT motif. The disordered stretch occupies residues 556 to 611 (KEVQLSGSEQIASSSVESYTTNDENHSRKHLKNRHKNRRRGHPHHQKTKSAQSSTE). A compositionally biased stretch (polar residues) spans 558-577 (VQLSGSEQIASSSVESYTTN). Basic residues predominate over residues 582–603 (SRKHLKNRHKNRRRGHPHHQKT). Residue S605 is modified to Phosphoserine. Positions 642–982 (SLLSFLRKNV…YITGPKSYWE (341 aa)) are OSBP-related domain (ORD). A 1,2-diacyl-sn-glycero-3-phospho-(1D-myo-inositol 4-phosphate)-binding positions include 657–660 (SIAM), K717, 745–746 (HR), and 945–949 (EQLQR).

This sequence belongs to the OSBP family. In terms of assembly, interacts with SCS2.

It is found in the cytoplasm. The protein resides in the endoplasmic reticulum membrane. Functionally, lipid transport protein (LTP) involved in non-vesicular transfer of lipids between membranes. Functions in phosphoinositide-coupled directional transport of various lipids by carrying the lipid molecule in a hydrophobic pocket and transferring it between membranes through the cytosol. Involved in maintenance of intracellular sterol distribution and homeostasis. May serve as a sensor of PI4P levels at PM-ER membrane contact site, regulating PI4P phosphatase SAC1 activity. May be involved in ergosterol transport from the plasma membrane (PM) to the ER, however it does not bind sterols directly. Plays a role in the positive regulation of vesicular transport of ceramide from the ER to the Golgi, negatively regulating COPII-mediated ER export of cargos. This chain is Oxysterol-binding protein homolog 3, found in Saccharomyces cerevisiae (strain ATCC 204508 / S288c) (Baker's yeast).